A 177-amino-acid polypeptide reads, in one-letter code: Probable DNA-directed RNA polymerase subunit delta (177 aa).

In terms of domain architecture, HTH HARE-type spans 14 to 81 (CSMIEVVHSV…GENRWGLRSW (68 aa)). The tract at residues 93–177 (PQPKPKKKRK…ETEEEEEEEL (85 aa)) is disordered. The span at 106–177 (DGFDDYIEED…ETEEEEEEEL (72 aa)) shows a compositional bias: acidic residues.

The protein belongs to the RpoE family. RNAP is composed of a core of 2 alpha, a beta and a beta' subunits. The core is associated with a delta subunit and one of several sigma factors.

Participates in both the initiation and recycling phases of transcription. In the presence of the delta subunit, RNAP displays an increased specificity of transcription, a decreased affinity for nucleic acids, and an increased efficiency of RNA synthesis because of enhanced recycling. In Bacillus cereus (strain AH187), this protein is Probable DNA-directed RNA polymerase subunit delta.